The chain runs to 364 residues: DNA polymerase IV (364 aa).

The 181-residue stretch at 7-187 folds into the UmuC domain; that stretch reads IIHVDMDAFY…LPVNRVPGVG (181 aa). Mg(2+)-binding residues include Asp-11 and Asp-105. Glu-106 is a catalytic residue.

This sequence belongs to the DNA polymerase type-Y family. In terms of assembly, monomer. Mg(2+) serves as cofactor.

It localises to the cytoplasm. It carries out the reaction DNA(n) + a 2'-deoxyribonucleoside 5'-triphosphate = DNA(n+1) + diphosphate. Its function is as follows. Poorly processive, error-prone DNA polymerase involved in untargeted mutagenesis. Copies undamaged DNA at stalled replication forks, which arise in vivo from mismatched or misaligned primer ends. These misaligned primers can be extended by PolIV. Exhibits no 3'-5' exonuclease (proofreading) activity. May be involved in translesional synthesis, in conjunction with the beta clamp from PolIII. This is DNA polymerase IV from Stenotrophomonas maltophilia (strain K279a).